We begin with the raw amino-acid sequence, 210 residues long: N-(5'-phosphoribosyl)anthranilate isomerase (210 aa).

It belongs to the TrpF family.

It catalyses the reaction N-(5-phospho-beta-D-ribosyl)anthranilate = 1-(2-carboxyphenylamino)-1-deoxy-D-ribulose 5-phosphate. Its pathway is amino-acid biosynthesis; L-tryptophan biosynthesis; L-tryptophan from chorismate: step 3/5. The chain is N-(5'-phosphoribosyl)anthranilate isomerase from Trichormus variabilis (strain ATCC 29413 / PCC 7937) (Anabaena variabilis).